Here is a 668-residue protein sequence, read N- to C-terminus: Metal reductase (668 aa).

FMN contacts are provided by residues Pro23 to His25, Gly57, Gln98, Arg216, Arg290, and Ala312 to Arg313. [4Fe-4S] cluster is bound by residues Cys336 and Cys339. Gln341 provides a ligand contact to FAD. [4Fe-4S] cluster-binding residues include Cys343 and Cys355. FAD-binding residues include Ala386, Glu405, Gln413, Arg423, and Ala450.

This sequence in the N-terminal section; belongs to the NADH:flavin oxidoreductase/NADH oxidase family. As to quaternary structure, homotetramer. FMN is required as a cofactor. FAD serves as cofactor. Requires [4Fe-4S] cluster as cofactor.

The protein localises to the cytoplasm. Metal reductase able to reduce Fe(III)-chelates to Fe(II)-chelates, as well as soluble Cr(VI) and U(VI), using NADH as electron donor. Cannot use NADPH as an electron donor. Is unable to reduce riboflavin and FMN with NADH as electron donor. May have an in vivo role in metal reduction in D.reducens, which is an organism capable of reducing contaminant heavy metals and radionuclides. In Desulforamulus reducens (strain ATCC BAA-1160 / DSM 100696 / MI-1) (Desulfotomaculum reducens), this protein is Metal reductase.